A 378-amino-acid polypeptide reads, in one-letter code: MKHSVHFGAGNIGRGFIGEILFKNGFHIDFVDVNNQIIHALNEKGKYEIEIAQKGQSRIEVTNVAGINSKEHPEQVIEAIQKTDIITTAIGPNILPFIAELLAKGIEARRVAGNTQVLDVMACENMIGGSQFLYQEVKKYLSPEGLTFADNYIGFPNAAVDRIVPAQSHEDSLFVVVEPFNEWVVETKRLKNPDLRLKDVHYEEDLEPFIERKLFSVNSGHATSAYIGAHYGAKTILEALQNPNIKSRIESVLAEIRSLLIAKWNFDKKELENYHKVIIERFENPFIVDEVSRVARTPIRKLGYNERFIRPIRELKELSLSYKNLLKTVGYAFDYRDVNDEESIRLGELLAKQSVKDVVIQVTGLDDQELIEQIVEYI.

4-15 (SVHFGAGNIGRG) is an NAD(+) binding site.

This sequence belongs to the mannitol dehydrogenase family.

The catalysed reaction is D-mannitol 1-phosphate + NAD(+) = beta-D-fructose 6-phosphate + NADH + H(+). This Streptococcus pneumoniae (strain CGSP14) protein is Mannitol-1-phosphate 5-dehydrogenase.